The primary structure comprises 99 residues: CTP synthase (99 aa).

In terms of domain architecture, Glutamine amidotransferase type-1 spans 1–99 (TMVTKLEKDS…FIKAIIENNK (99 aa)). Position 28 (Arg-28) interacts with L-glutamine. Residues His-73 and Glu-75 contribute to the active site.

Belongs to the CTP synthase family. As to quaternary structure, homotetramer.

It carries out the reaction UTP + L-glutamine + ATP + H2O = CTP + L-glutamate + ADP + phosphate + 2 H(+). The catalysed reaction is L-glutamine + H2O = L-glutamate + NH4(+). It catalyses the reaction UTP + NH4(+) + ATP = CTP + ADP + phosphate + 2 H(+). The protein operates within pyrimidine metabolism; CTP biosynthesis via de novo pathway; CTP from UDP: step 2/2. With respect to regulation, allosterically activated by GTP, when glutamine is the substrate; GTP has no effect on the reaction when ammonia is the substrate. The allosteric effector GTP functions by stabilizing the protein conformation that binds the tetrahedral intermediate(s) formed during glutamine hydrolysis. Inhibited by the product CTP, via allosteric rather than competitive inhibition. In terms of biological role, catalyzes the ATP-dependent amination of UTP to CTP with either L-glutamine or ammonia as the source of nitrogen. Regulates intracellular CTP levels through interactions with the four ribonucleotide triphosphates. The sequence is that of CTP synthase from Mycoplasma capricolum subsp. capripneumoniae.